We begin with the raw amino-acid sequence, 154 residues long: MSNKFVITWDNMQTYCRQLAEKQMPAEQWKGIWAVSRGGLVPGAILARELGIRHVDTICISSYDHDHQRDMTVVKAPEGDGEGFLIVEDLVDSGDTARKLREMYPKAKLIAVCAKPSGADLLDEYIVDIAQDTWIEQPWDTSLSYVEPVNRKSK.

Residues 37–38, R69, and 88–96 contribute to the 5-phospho-alpha-D-ribose 1-diphosphate site; these read RG and EDLVDSGDT. R69 lines the GMP pocket. D89 lines the Mg(2+) pocket. Guanine contacts are provided by D92 and I135. Xanthine contacts are provided by D92 and I135. Residues 92-96 and 134-135 contribute to the GMP site; these read DSGDT and WI.

Belongs to the purine/pyrimidine phosphoribosyltransferase family. XGPT subfamily. As to quaternary structure, homotetramer. The cofactor is Mg(2+).

It localises to the cell inner membrane. The enzyme catalyses GMP + diphosphate = guanine + 5-phospho-alpha-D-ribose 1-diphosphate. It catalyses the reaction XMP + diphosphate = xanthine + 5-phospho-alpha-D-ribose 1-diphosphate. It carries out the reaction IMP + diphosphate = hypoxanthine + 5-phospho-alpha-D-ribose 1-diphosphate. It functions in the pathway purine metabolism; GMP biosynthesis via salvage pathway; GMP from guanine: step 1/1. Its pathway is purine metabolism; XMP biosynthesis via salvage pathway; XMP from xanthine: step 1/1. Its function is as follows. Purine salvage pathway enzyme that catalyzes the transfer of the ribosyl-5-phosphate group from 5-phospho-alpha-D-ribose 1-diphosphate (PRPP) to the N9 position of the 6-oxopurines guanine and xanthine to form the corresponding ribonucleotides GMP (guanosine 5'-monophosphate) and XMP (xanthosine 5'-monophosphate), with the release of PPi. To a lesser extent, also acts on hypoxanthine. The polypeptide is Xanthine-guanine phosphoribosyltransferase (Vibrio atlanticus (strain LGP32) (Vibrio splendidus (strain Mel32))).